The chain runs to 319 residues: tRNA-cytidine(32) 2-sulfurtransferase (319 aa).

A PP-loop motif motif is present at residues 49–54 (SGGKDS). [4Fe-4S] cluster contacts are provided by Cys-124, Cys-127, and Cys-215. A disordered region spans residues 276 to 319 (DGDTAFDKEEFRDPAPDADDVEDAPKKRTISILDSRGKESGCGA). Composition is skewed to basic and acidic residues over residues 280 to 290 (AFDKEEFRDPA) and 310 to 319 (SRGKESGCGA).

It belongs to the TtcA family. In terms of assembly, homodimer. Mg(2+) is required as a cofactor. It depends on [4Fe-4S] cluster as a cofactor.

It is found in the cytoplasm. It carries out the reaction cytidine(32) in tRNA + S-sulfanyl-L-cysteinyl-[cysteine desulfurase] + AH2 + ATP = 2-thiocytidine(32) in tRNA + L-cysteinyl-[cysteine desulfurase] + A + AMP + diphosphate + H(+). It functions in the pathway tRNA modification. Functionally, catalyzes the ATP-dependent 2-thiolation of cytidine in position 32 of tRNA, to form 2-thiocytidine (s(2)C32). The sulfur atoms are provided by the cysteine/cysteine desulfurase (IscS) system. In Chromobacterium violaceum (strain ATCC 12472 / DSM 30191 / JCM 1249 / CCUG 213 / NBRC 12614 / NCIMB 9131 / NCTC 9757 / MK), this protein is tRNA-cytidine(32) 2-sulfurtransferase.